We begin with the raw amino-acid sequence, 255 residues long: 4-diphosphocytidyl-2-C-methyl-D-erythritol kinase (255 aa).

The active site involves K6. Position 95–105 (P95–S105) interacts with ATP. The active site involves D137.

The protein belongs to the GHMP kinase family. IspE subfamily.

The enzyme catalyses 4-CDP-2-C-methyl-D-erythritol + ATP = 4-CDP-2-C-methyl-D-erythritol 2-phosphate + ADP + H(+). The protein operates within isoprenoid biosynthesis; isopentenyl diphosphate biosynthesis via DXP pathway; isopentenyl diphosphate from 1-deoxy-D-xylulose 5-phosphate: step 3/6. Catalyzes the phosphorylation of the position 2 hydroxy group of 4-diphosphocytidyl-2C-methyl-D-erythritol. This Campylobacter jejuni subsp. doylei (strain ATCC BAA-1458 / RM4099 / 269.97) protein is 4-diphosphocytidyl-2-C-methyl-D-erythritol kinase.